We begin with the raw amino-acid sequence, 341 residues long: Anthranilate phosphoribosyltransferase (341 aa).

5-phospho-alpha-D-ribose 1-diphosphate is bound by residues glycine 79, 82-83 (GD), threonine 87, 89-92 (NIST), 107-115 (KHGNRAVSS), and serine 119. Glycine 79 is an anthranilate binding site. Mg(2+) is bound at residue serine 91. Asparagine 110 provides a ligand contact to anthranilate. Position 165 (arginine 165) interacts with anthranilate. 2 residues coordinate Mg(2+): aspartate 224 and glutamate 225.

It belongs to the anthranilate phosphoribosyltransferase family. As to quaternary structure, homodimer. It depends on Mg(2+) as a cofactor.

The catalysed reaction is N-(5-phospho-beta-D-ribosyl)anthranilate + diphosphate = 5-phospho-alpha-D-ribose 1-diphosphate + anthranilate. The protein operates within amino-acid biosynthesis; L-tryptophan biosynthesis; L-tryptophan from chorismate: step 2/5. Catalyzes the transfer of the phosphoribosyl group of 5-phosphorylribose-1-pyrophosphate (PRPP) to anthranilate to yield N-(5'-phosphoribosyl)-anthranilate (PRA). In Bacillus cereus (strain AH820), this protein is Anthranilate phosphoribosyltransferase.